The sequence spans 288 residues: 4-diphosphocytidyl-2-C-methyl-D-erythritol kinase (288 aa).

K11 is a catalytic residue. 95 to 105 (PVAAGMAGGSS) contacts ATP. D137 is an active-site residue.

The protein belongs to the GHMP kinase family. IspE subfamily.

It carries out the reaction 4-CDP-2-C-methyl-D-erythritol + ATP = 4-CDP-2-C-methyl-D-erythritol 2-phosphate + ADP + H(+). It participates in isoprenoid biosynthesis; isopentenyl diphosphate biosynthesis via DXP pathway; isopentenyl diphosphate from 1-deoxy-D-xylulose 5-phosphate: step 3/6. In terms of biological role, catalyzes the phosphorylation of the position 2 hydroxy group of 4-diphosphocytidyl-2C-methyl-D-erythritol. In Lachnospira eligens (strain ATCC 27750 / DSM 3376 / VPI C15-48 / C15-B4) (Eubacterium eligens), this protein is 4-diphosphocytidyl-2-C-methyl-D-erythritol kinase.